The sequence spans 96 residues: Integration host factor subunit beta (96 aa).

The interval 59 to 78 (RVGRNPKTGETVSLPGKYVP) is disordered.

It belongs to the bacterial histone-like protein family. In terms of assembly, heterodimer of an alpha and a beta chain.

Functionally, this protein is one of the two subunits of integration host factor, a specific DNA-binding protein that functions in genetic recombination as well as in transcriptional and translational control. This chain is Integration host factor subunit beta, found in Thioalkalivibrio sulfidiphilus (strain HL-EbGR7).